A 108-amino-acid polypeptide reads, in one-letter code: Ferredoxin, plant-type (108 aa).

Residues 5-96 (FEITVQPGGE…DLCIERYSKP (92 aa)) form the 2Fe-2S ferredoxin-type domain. The [2Fe-2S] cluster site is built by Cys40, Cys45, Cys48, and Cys80.

Belongs to the 2Fe2S plant-type ferredoxin family.

Its pathway is aromatic compound metabolism; catechol degradation. Ferredoxins are iron-sulfur proteins that transfer electrons in a wide variety of metabolic reactions. The sequence is that of Ferredoxin, plant-type (nahT) from Pseudomonas putida (Arthrobacter siderocapsulatus).